A 182-amino-acid polypeptide reads, in one-letter code: MPVAALIREEIEIPGNVSVEVNGSEVVVKSGAKVLKRELAFPGIEIKMENEKVVVESTFPKKNQTAMVGTYRSHIQNMIKGVSEGFEYKLVIRYAHFPMKVTFKGNTVIIDNFLGEKYPRTAKVMEGVTVKVNGEEVIVSGTNKEFVGQTAANIEQATKVKGRDTRIFQDGIYIVEKAGKVL.

It belongs to the universal ribosomal protein uL6 family. Part of the 50S ribosomal subunit.

Its function is as follows. This protein binds to the 23S rRNA, and is important in its secondary structure. It is located near the subunit interface in the base of the L7/L12 stalk, and near the tRNA binding site of the peptidyltransferase center. This chain is Large ribosomal subunit protein uL6, found in Methanococcus vannielii.